Reading from the N-terminus, the 272-residue chain is 3',5'-cyclic adenosine monophosphate phosphodiesterase CpdA (272 aa).

Residues Asp-21, His-23, Asp-63, Asn-93, His-161, His-200, and His-202 each contribute to the Fe cation site. Residues His-23, Asp-63, and 93 to 94 each bind AMP; that span reads NH. His-202 contacts AMP.

This sequence belongs to the cyclic nucleotide phosphodiesterase class-III family. In terms of assembly, monomer. It depends on a divalent metal cation as a cofactor.

The catalysed reaction is 3',5'-cyclic AMP + H2O = AMP + H(+). Activated by iron. Other divalent metal ions have no effect. Hydrolyzes cAMP to 5'-AMP. Plays an important regulatory role in modulating the intracellular concentration of cAMP, thereby influencing cAMP-dependent processes. Specifically required for regulation of virulence factors. Can also hydrolyze cGMP, but cGMP is unlikely to be synthesized by P.aeruginosa and cAMP is probably the biologically relevant substrate for CpdA in vivo. The sequence is that of 3',5'-cyclic adenosine monophosphate phosphodiesterase CpdA from Pseudomonas aeruginosa.